The primary structure comprises 294 residues: N-acetylmuramic acid 6-phosphate etherase (294 aa).

The 164-residue stretch at 54 to 217 (VISSFQNGGR…STASMIGIGK (164 aa)) folds into the SIS domain. Glu82 functions as the Proton donor in the catalytic mechanism. Glu113 is a catalytic residue.

It belongs to the GCKR-like family. MurNAc-6-P etherase subfamily. As to quaternary structure, homodimer.

It catalyses the reaction N-acetyl-D-muramate 6-phosphate + H2O = N-acetyl-D-glucosamine 6-phosphate + (R)-lactate. Its pathway is amino-sugar metabolism; N-acetylmuramate degradation. In terms of biological role, specifically catalyzes the cleavage of the D-lactyl ether substituent of MurNAc 6-phosphate, producing GlcNAc 6-phosphate and D-lactate. The polypeptide is N-acetylmuramic acid 6-phosphate etherase (Bacillus cytotoxicus (strain DSM 22905 / CIP 110041 / 391-98 / NVH 391-98)).